Consider the following 357-residue polypeptide: Peptide chain release factor 1 (357 aa).

The residue at position 236 (Gln-236) is an N5-methylglutamine.

This sequence belongs to the prokaryotic/mitochondrial release factor family. Methylated by PrmC. Methylation increases the termination efficiency of RF1.

Its subcellular location is the cytoplasm. Its function is as follows. Peptide chain release factor 1 directs the termination of translation in response to the peptide chain termination codons UAG and UAA. This Mycobacterium marinum (strain ATCC BAA-535 / M) protein is Peptide chain release factor 1.